A 300-amino-acid chain; its full sequence is N-carbamoylputrescine amidase (300 aa).

A CN hydrolase domain is found at 8 to 266 (VTVAALQFAC…EAVLVAQFDL (259 aa)). The Proton acceptor role is filled by Glu-47. Lys-120 acts as the Proton donor in catalysis. Cys-157 functions as the Nucleophile in the catalytic mechanism.

It belongs to the carbon-nitrogen hydrolase superfamily. As to quaternary structure, homooctamer.

It carries out the reaction N-carbamoylputrescine + H2O + 2 H(+) = putrescine + NH4(+) + CO2. The protein operates within amine and polyamine biosynthesis; putrescine biosynthesis via agmatine pathway; putrescine from N-carbamoylputrescine (amidase route): step 1/1. Functionally, involved in polyamine biosynthesis. In Solanum lycopersicum (Tomato), this protein is N-carbamoylputrescine amidase (CPA).